Here is a 68-residue protein sequence, read N- to C-terminus: uncharacterized protein (68 aa).

The next 2 helical transmembrane spans lie at 1–21 (MLFI…YFLP) and 28–48 (VHFS…LSSV).

It is found in the cell membrane. This is an uncharacterized protein from Haemophilus influenzae (strain ATCC 51907 / DSM 11121 / KW20 / Rd).